The sequence spans 574 residues: MYIRRLNDQTANQIAAGEVVERPASVVKELIENSIDAHASCIRVDILQGGAKQIRIQDDGDGIHPEDLVLALERHATSKIAKIDDLQDITTLGFRGEALASISAVSRLTLTSRQKNAEMGYRISNISHKIMTPVPAAHPQGTTIDVQDLFYNTPARRKFLRSPATEFQHIRRIIERLALSHFTTEFLLHHNEKEIIHFKSATTISGQENRIKSILGDVFMQSALAIEFSQSGLTLKGYIAEAAYTRSQPDLQYIYVNGRFVRDKLIAQALRQAYHDVLFHGRHPAYVLYLEIDPAFVDINVHPTKHEVRFRDPQWVRDFLIHAVKTALAQAKPGIAHPLPQSTAEYNPITNFAPTPLIEGQGNLSLIQEQPAPYTQTIVHKHPLGHALAQLQGIYILSQNEKGLVIVDMHAAHERILYEKMKKQLAEVGLAMQSLLVPINLSLNPQEITAWQTNKALFARLGFEIESFGPDKIVVRRHPSLLKPKNLENLIRDVLADLITHNTTSRVGERINAALATLACHAALRAPHYLTIEEMEALLREMEKTEHGGLCNHGRPTWKQFDIAELDTFFLRGQ.

This sequence belongs to the DNA mismatch repair MutL/HexB family.

Functionally, this protein is involved in the repair of mismatches in DNA. It is required for dam-dependent methyl-directed DNA mismatch repair. May act as a 'molecular matchmaker', a protein that promotes the formation of a stable complex between two or more DNA-binding proteins in an ATP-dependent manner without itself being part of a final effector complex. In Coxiella burnetii (strain Dugway 5J108-111), this protein is DNA mismatch repair protein MutL.